A 388-amino-acid chain; its full sequence is Nitric oxide reductase FlRd-NAD(+) reductase (388 aa).

The protein belongs to the FAD-dependent oxidoreductase family. The cofactor is FAD.

Its subcellular location is the cytoplasm. It carries out the reaction 2 reduced [nitric oxide reductase rubredoxin domain] + NAD(+) + H(+) = 2 oxidized [nitric oxide reductase rubredoxin domain] + NADH. The protein operates within nitrogen metabolism; nitric oxide reduction. Functionally, one of at least two accessory proteins for anaerobic nitric oxide (NO) reductase. Reduces the rubredoxin moiety of NO reductase. The sequence is that of Nitric oxide reductase FlRd-NAD(+) reductase from Aeromonas salmonicida (strain A449).